Consider the following 25-residue polypeptide: Ribosome-inactivating protein charantin (25 aa).

Monomer.

The enzyme catalyses Endohydrolysis of the N-glycosidic bond at one specific adenosine on the 28S rRNA.. Functionally, inhibits cell-free translation in a rabbit reticulocyte lysate system. This Momordica charantia (Bitter gourd) protein is Ribosome-inactivating protein charantin.